We begin with the raw amino-acid sequence, 287 residues long: ATP synthase gamma chain (287 aa).

Belongs to the ATPase gamma chain family. As to quaternary structure, F-type ATPases have 2 components, CF(1) - the catalytic core - and CF(0) - the membrane proton channel. CF(1) has five subunits: alpha(3), beta(3), gamma(1), delta(1), epsilon(1). CF(0) has three main subunits: a, b and c.

Its subcellular location is the cell inner membrane. Functionally, produces ATP from ADP in the presence of a proton gradient across the membrane. The gamma chain is believed to be important in regulating ATPase activity and the flow of protons through the CF(0) complex. This chain is ATP synthase gamma chain, found in Salmonella agona (strain SL483).